The chain runs to 661 residues: MNNFSIISEYKPAGDQPKAIDEIIAGLNSKKRSQMLLGITGSGKTFTMANIIARMNRPTLIMAHNKTLAAQIYSEMKLMFPKNAIEYFVSYYDYYQPEAYIARTDTFIEKDSSINEQIDLMRHSATRSLLERRDVIVVSSVSCIYGLGSPNLYYQMTVNLESGKSYPRDKLLSDLVNLQYERNDIGFERGCFRVKGDNIDIFPSHYSDKAWRLSFVGNELEYIHEFDPLTGTKLAKLDKAMVFGNSHFVIPQETVNKAISEIEVELQKRLELLKSQNKILETQRLNQRTQYDLEMLTTTGSCKGIENYSRFLTGRNAGEPPPTLFEYLPKDALLFVDESHVSVPQIRAMYNGDRARKKVLVEHGFRLPSALDNRPLKFEEWEKFRPQTIFVSATPGPFELEETGGLVVELIIRPTGLLDPECIIKPATNQVEDLISEIQTTIAKGLRVLVTTLTKKMAEDLTTYLQELKYKSSYLHSNVHTLERLEILRDLRQGTINILVGINLLREGLDIPECGLVAILDADKEGFLRSEVSLIQTIGRAARNSEGRVILYADKITKSIDKAVSETMRRRQIQQEYNEKHGIIPQTINRTIYALTALKKIDSKLDKKQAHILFDNPAKLKAHIYKLKKAMLKAASNLEFEQATKLRDQLKNLEEAALELS.

The 158-residue stretch at 25–182 (AGLNSKKRSQ…SDLVNLQYER (158 aa)) folds into the Helicase ATP-binding domain. Residue 38 to 45 (GITGSGKT) participates in ATP binding. The Beta-hairpin motif lies at 91–114 (YYDYYQPEAYIARTDTFIEKDSSI). Residues 430–592 (QVEDLISEIQ…IIPQTINRTI (163 aa)) form the Helicase C-terminal domain. One can recognise a UVR domain in the interval 621–656 (KAHIYKLKKAMLKAASNLEFEQATKLRDQLKNLEEA).

This sequence belongs to the UvrB family. As to quaternary structure, forms a heterotetramer with UvrA during the search for lesions. Interacts with UvrC in an incision complex.

The protein resides in the cytoplasm. In terms of biological role, the UvrABC repair system catalyzes the recognition and processing of DNA lesions. A damage recognition complex composed of 2 UvrA and 2 UvrB subunits scans DNA for abnormalities. Upon binding of the UvrA(2)B(2) complex to a putative damaged site, the DNA wraps around one UvrB monomer. DNA wrap is dependent on ATP binding by UvrB and probably causes local melting of the DNA helix, facilitating insertion of UvrB beta-hairpin between the DNA strands. Then UvrB probes one DNA strand for the presence of a lesion. If a lesion is found the UvrA subunits dissociate and the UvrB-DNA preincision complex is formed. This complex is subsequently bound by UvrC and the second UvrB is released. If no lesion is found, the DNA wraps around the other UvrB subunit that will check the other stand for damage. This Rickettsia canadensis (strain McKiel) protein is UvrABC system protein B.